The following is a 72-amino-acid chain: MAKDDVIEVEGTIVETLPNAMFKVELENGHTVLAHVSGKIRMHFIRILPGDKVTVELSPYDLTRGRITYRYK.

The 71-residue stretch at 2 to 72 (AKDDVIEVEG…TRGRITYRYK (71 aa)) folds into the S1-like domain. Tyrosine 60 is modified (phosphotyrosine).

Belongs to the IF-1 family. As to quaternary structure, component of the 30S ribosomal translation pre-initiation complex which assembles on the 30S ribosome in the order IF-2 and IF-3, IF-1 and N-formylmethionyl-tRNA(fMet); mRNA recruitment can occur at any time during PIC assembly.

The protein resides in the cytoplasm. In terms of biological role, one of the essential components for the initiation of protein synthesis. Stabilizes the binding of IF-2 and IF-3 on the 30S subunit to which N-formylmethionyl-tRNA(fMet) subsequently binds. Helps modulate mRNA selection, yielding the 30S pre-initiation complex (PIC). Upon addition of the 50S ribosomal subunit IF-1, IF-2 and IF-3 are released leaving the mature 70S translation initiation complex. The sequence is that of Translation initiation factor IF-1 from Bacillus subtilis (strain 168).